The following is a 331-amino-acid chain: Tetraacyldisaccharide 4'-kinase (331 aa).

Position 57–64 (S57–T64) interacts with ATP.

The protein belongs to the LpxK family.

The enzyme catalyses a lipid A disaccharide + ATP = a lipid IVA + ADP + H(+). It functions in the pathway glycolipid biosynthesis; lipid IV(A) biosynthesis; lipid IV(A) from (3R)-3-hydroxytetradecanoyl-[acyl-carrier-protein] and UDP-N-acetyl-alpha-D-glucosamine: step 6/6. In terms of biological role, transfers the gamma-phosphate of ATP to the 4'-position of a tetraacyldisaccharide 1-phosphate intermediate (termed DS-1-P) to form tetraacyldisaccharide 1,4'-bis-phosphate (lipid IVA). The polypeptide is Tetraacyldisaccharide 4'-kinase (Histophilus somni (strain 2336) (Haemophilus somnus)).